We begin with the raw amino-acid sequence, 257 residues long: Probable enoyl-CoA hydratase (257 aa).

This sequence belongs to the enoyl-CoA hydratase/isomerase family.

It carries out the reaction a (3S)-3-hydroxyacyl-CoA = a (2E)-enoyl-CoA + H2O. The enzyme catalyses a 4-saturated-(3S)-3-hydroxyacyl-CoA = a (3E)-enoyl-CoA + H2O. Its function is as follows. Could possibly oxidize fatty acids using specific components. The polypeptide is Probable enoyl-CoA hydratase (fadB1) (Rhodobacter capsulatus (strain ATCC BAA-309 / NBRC 16581 / SB1003)).